The following is a 255-amino-acid chain: uncharacterized protein (255 aa).

The HTH deoR-type domain maps to 4 to 59 (RNERLNLIRKRVDQYGQVAVKDLAIFLQVTPETVRKDLETLENDKLITRTHGGAIQ). A DNA-binding region (H-T-H motif) is located at residues 21–40 (VAVKDLAIFLQVTPETVRKD).

This is an uncharacterized protein from Staphylococcus epidermidis (strain ATCC 12228 / FDA PCI 1200).